Consider the following 568-residue polypeptide: O-fucosyltransferase 9 (568 aa).

The segment covering 1-19 has biased composition (low complexity); the sequence is MHGLSRLGNGSSNGRINIP. A disordered region spans residues 1-33; it reads MHGLSRLGNGSSNGRINIPSPSPPSSPRIRHTR. Residues 65–85 form a helical; Signal-anchor for type II membrane protein membrane-spanning segment; it reads LLLAPLLYIAGMLLFMGSFGF. Residues asparagine 125, asparagine 151, asparagine 189, and asparagine 243 are each glycosylated (N-linked (GlcNAc...) asparagine). 336 to 338 is a substrate binding site; the sequence is HLR. Residues asparagine 408 and asparagine 409 are each glycosylated (N-linked (GlcNAc...) asparagine).

The protein belongs to the glycosyltransferase GT106 family.

Its subcellular location is the membrane. It participates in glycan metabolism. The chain is O-fucosyltransferase 9 from Arabidopsis thaliana (Mouse-ear cress).